Here is a 252-residue protein sequence, read N- to C-terminus: 3-dehydroquinate dehydratase (252 aa).

Residues 46 to 48 (EWR) and R82 each bind 3-dehydroquinate. Residue H143 is the Proton donor/acceptor of the active site. K170 (schiff-base intermediate with substrate) is an active-site residue. Residues R212, S231, and Q235 each contribute to the 3-dehydroquinate site.

Belongs to the type-I 3-dehydroquinase family. Homodimer.

The catalysed reaction is 3-dehydroquinate = 3-dehydroshikimate + H2O. Its pathway is metabolic intermediate biosynthesis; chorismate biosynthesis; chorismate from D-erythrose 4-phosphate and phosphoenolpyruvate: step 3/7. Functionally, involved in the third step of the chorismate pathway, which leads to the biosynthesis of aromatic amino acids. Catalyzes the cis-dehydration of 3-dehydroquinate (DHQ) and introduces the first double bond of the aromatic ring to yield 3-dehydroshikimate. The chain is 3-dehydroquinate dehydratase from Listeria welshimeri serovar 6b (strain ATCC 35897 / DSM 20650 / CCUG 15529 / CIP 8149 / NCTC 11857 / SLCC 5334 / V8).